The chain runs to 431 residues: MTWLSGLYSIFVASAAFCSLGLILVAVILLSRKFLIKVHPCKLKINNDDSLTKTVDSGKTLLSSLLDSGIAIPSPCGGKAACKQCKVRITKNADEPLETDRSTFSKQQLEQGWRLSCQTKVQHDLCLEVEERYFNASSWEGTVVSNENVATFIKELVLSVDPSRPIPFKPGGYLQITVPPYKTNTSDWKQTMDPQYYSDWETFHLFDQVIDNLSLDTDSANKAYSLASYPAELPLIKFNVRIATPPFVDQAPDPTIPWGVCSSYIFSLKPGDKVMISGPYGESFMKEDNRPVIFLIGGAGSSFGRSHILDLLLNKHSDRELTLWYGARSLKENIYQEEYEKLEKEFPNFHYHLVLSQPLQEDLDQGWDKNDPIKTNFLFKAFELRQLSHLPNPEDYLYYVCGPALHNSSILTLLDNYGIERSSIVLDDFGS.

Residues 10-30 form a helical membrane-spanning segment; that stretch reads IFVASAAFCSLGLILVAVILL. Residues 41–133 enclose the 2Fe-2S ferredoxin-type domain; it reads CKLKINNDDS…DLCLEVEERY (93 aa). [2Fe-2S] cluster-binding residues include Cys-76, Cys-82, Cys-85, and Cys-117. The region spanning 136-286 is the FAD-binding FR-type domain; the sequence is ASSWEGTVVS…SGPYGESFMK (151 aa).

Belongs to the NqrF family. Composed of six subunits; NqrA, NqrB, NqrC, NqrD, NqrE and NqrF. [2Fe-2S] cluster is required as a cofactor. Requires FAD as cofactor.

The protein resides in the cell inner membrane. It carries out the reaction a ubiquinone + n Na(+)(in) + NADH + H(+) = a ubiquinol + n Na(+)(out) + NAD(+). NQR complex catalyzes the reduction of ubiquinone-1 to ubiquinol by two successive reactions, coupled with the transport of Na(+) ions from the cytoplasm to the periplasm. The first step is catalyzed by NqrF, which accepts electrons from NADH and reduces ubiquinone-1 to ubisemiquinone by a one-electron transfer pathway. In Chlamydia trachomatis serovar A (strain ATCC VR-571B / DSM 19440 / HAR-13), this protein is Na(+)-translocating NADH-quinone reductase subunit F.